Here is a 400-residue protein sequence, read N- to C-terminus: Subtilisin-like protease 11 (400 aa).

The first 19 residues, 1 to 19, serve as a signal peptide directing secretion; the sequence is MGLFTVVFTAIAALSAVDA. Positions 20 to 117 are excised as a propeptide; sequence AELLRSPNSK…VEHDRYVYID (98 aa). One can recognise an Inhibitor I9 domain in the interval 35–116; the sequence is SYLVVMKDSV…FVEHDRYVYI (82 aa). The region spanning 127 to 400 is the Peptidase S8 domain; it reads SWGLGRVSHR…NKLLYNGSGQ (274 aa). Residue Asn-138 is glycosylated (N-linked (GlcNAc...) asparagine). Residues Asp-159 and His-191 each act as charge relay system in the active site. N-linked (GlcNAc...) asparagine glycans are attached at residues Asn-252, Asn-336, and Asn-337. Residue Ser-346 is the Charge relay system of the active site. Residues Asn-388 and Asn-396 are each glycosylated (N-linked (GlcNAc...) asparagine).

The protein belongs to the peptidase S8 family.

Its subcellular location is the secreted. In terms of biological role, secreted subtilisin-like serine protease with keratinolytic activity that contributes to pathogenicity. The polypeptide is Subtilisin-like protease 11 (SUB11) (Arthroderma gypseum (strain ATCC MYA-4604 / CBS 118893) (Microsporum gypseum)).